A 631-amino-acid polypeptide reads, in one-letter code: Eukaryotic translation initiation factor 2-alpha kinase 1 (631 aa).

The segment at Met1–Ser34 is disordered. The short motif at Leu85 to Leu104 is the SIFI-degron element. The Protein kinase domain maps to Phe167–Phe583. ATP is bound by residues Leu173–Val181 and Lys196. The segment at Gln260–Asn301 is disordered. At Thr285 the chain carries Phosphothreonine. Basic and acidic residues predominate over residues Thr285–Asn301. An HRM 1 repeat occupies Ala410–Met415. The Proton acceptor role is filled by Asp442. 2 positions are modified to phosphothreonine; by autocatalysis: Thr486 and Thr488. Thr493 is subject to Phosphothreonine. The HRM 2 repeat unit spans residues Arg552–Ala557.

Belongs to the protein kinase superfamily. Ser/Thr protein kinase family. GCN2 subfamily. As to quaternary structure, synthesized in an inactive form that binds to the N-terminal domain of CDC37. Has to be associated with a multiprotein complex containing Hsp90, CDC37 and PPP5C for maturation and activation by autophosphorylation. The phosphatase PPP5C modulates this activation. Homodimer; homodimerizes in presence of heme, forming a disulfide-linked inactive homodimer. Interacts with DELE1; binds both to full-length DELE1 and processed form of DELE1 (S-DELE1) in response to stress, leading to activate its protein kinase activity and trigger the integrated stress response (ISR). Post-translationally, activated by autophosphorylation; phosphorylated predominantly on serine and threonine residues, but also on tyrosine residues. Autophosphorylation at Thr-488 is required for kinase activation. The active autophosphorylated form apparently is largely refractory to cellular heme fluctuations. Ubiquitinated and degraded by the SIFI complex once the mitochondrial stress has been resolved, thereby providing stress response silencing. Within the SIFI complex, UBR4 initiates ubiquitin chain that are further elongated or branched by KCMF1.

The protein resides in the cytoplasm. It catalyses the reaction L-seryl-[protein] + ATP = O-phospho-L-seryl-[protein] + ADP + H(+). The catalysed reaction is L-threonyl-[protein] + ATP = O-phospho-L-threonyl-[protein] + ADP + H(+). In normal conditions, the protein kinase activity is inhibited; inhibition is relieved by various stress conditions. Inhibited by heme: in presence of heme, forms a disulfide-linked inactive homodimer. Heme depletion relieves inhibition and stimulates kinase activity by autophosphorylation. Inhibited by the heme metabolites biliverdin and bilirubin. Induced by oxidative stress generated by arsenite treatment. Binding of nitric oxide (NO) to the heme iron in the N-terminal heme-binding domain activates the kinase activity, while binding of carbon monoxide (CO) suppresses kinase activity. Protein kinase activity is also activated upon binding to DELE1 in response to various stress, triggering the integrated stress response (ISR): activated by full-length DELE1 in response to iron deficiency, while it is activated by the processed form of DELE1 (S-DELE1) in response to mitochondrial stress. Its function is as follows. Metabolic-stress sensing protein kinase that phosphorylates the alpha subunit of eukaryotic translation initiation factor 2 (EIF2S1/eIF-2-alpha) in response to various stress conditions. Key activator of the integrated stress response (ISR) required for adaptation to various stress, such as heme deficiency, oxidative stress, osmotic shock, mitochondrial dysfunction and heat shock. EIF2S1/eIF-2-alpha phosphorylation in response to stress converts EIF2S1/eIF-2-alpha in a global protein synthesis inhibitor, leading to a global attenuation of cap-dependent translation, while concomitantly initiating the preferential translation of ISR-specific mRNAs, such as the transcriptional activator ATF4, and hence allowing ATF4-mediated reprogramming. Acts as a key sensor of heme-deficiency: in normal conditions, binds hemin via a cysteine thiolate and histidine nitrogenous coordination, leading to inhibit the protein kinase activity. This binding occurs with moderate affinity, allowing it to sense the heme concentration within the cell: heme depletion relieves inhibition and stimulates kinase activity, activating the ISR. Thanks to this unique heme-sensing capacity, plays a crucial role to shut off protein synthesis during acute heme-deficient conditions. In red blood cells (RBCs), controls hemoglobin synthesis ensuring a coordinated regulation of the synthesis of its heme and globin moieties. It thereby plays an essential protective role for RBC survival in anemias of iron deficiency. Iron deficiency also triggers activation by full-length DELE1. Also activates the ISR in response to mitochondrial dysfunction: HRI/EIF2AK1 protein kinase activity is activated upon binding to the processed form of DELE1 (S-DELE1), thereby promoting the ATF4-mediated reprogramming. Also acts as an activator of mitophagy in response to mitochondrial damage: catalyzes phosphorylation of eIF-2-alpha (EIF2S1) following activation by S-DELE1, thereby promoting mitochondrial localization of EIF2S1, triggering PRKN-independent mitophagy. In Macaca fascicularis (Crab-eating macaque), this protein is Eukaryotic translation initiation factor 2-alpha kinase 1.